We begin with the raw amino-acid sequence, 101 residues long: Small ribosomal subunit protein uS14 (101 aa).

It belongs to the universal ribosomal protein uS14 family. Part of the 30S ribosomal subunit. Contacts proteins S3 and S10.

In terms of biological role, binds 16S rRNA, required for the assembly of 30S particles and may also be responsible for determining the conformation of the 16S rRNA at the A site. The chain is Small ribosomal subunit protein uS14 from Xylella fastidiosa (strain M23).